The following is a 535-amino-acid chain: GMP synthase [glutamine-hydrolyzing] (535 aa).

One can recognise a Glutamine amidotransferase type-1 domain in the interval 21 to 211 (LIVILDFGSQ…VYHICDCEPT (191 aa)). Cysteine 98 acts as the Nucleophile in catalysis. Residues histidine 185 and glutamate 187 contribute to the active site. The GMPS ATP-PPase domain maps to 212 to 410 (WTTAAFVEEA…LGLPEEIVQR (199 aa)). An ATP-binding site is contributed by 239–245 (SGGVDSS).

Homodimer.

The catalysed reaction is XMP + L-glutamine + ATP + H2O = GMP + L-glutamate + AMP + diphosphate + 2 H(+). The protein operates within purine metabolism; GMP biosynthesis; GMP from XMP (L-Gln route): step 1/1. In terms of biological role, catalyzes the synthesis of GMP from XMP. The chain is GMP synthase [glutamine-hydrolyzing] from Thermosynechococcus vestitus (strain NIES-2133 / IAM M-273 / BP-1).